The following is a 1128-amino-acid chain: Exportin-6 (1128 aa).

The 67-residue stretch at Ile-31–Ser-97 folds into the Importin N-terminal domain.

It belongs to the exportin family.

Its subcellular location is the nucleus. It is found in the cytoplasm. Mediates the nuclear export of actin and profilin-actin complexes in somatic cells. This chain is Exportin-6 (xpo6), found in Danio rerio (Zebrafish).